A 242-amino-acid polypeptide reads, in one-letter code: Probable transcriptional regulatory protein XAC3151 (242 aa).

Belongs to the TACO1 family.

It localises to the cytoplasm. This Xanthomonas axonopodis pv. citri (strain 306) protein is Probable transcriptional regulatory protein XAC3151.